Reading from the N-terminus, the 321-residue chain is Putative pyridoxal kinase (321 aa).

Positions 23 and 144 each coordinate substrate. Residues 203-204 (TS) and 230-242 (TFPRLVGQFVGTG) each bind ATP. Asp243 is a binding site for substrate.

This sequence belongs to the pyridoxine kinase family. Zn(2+) serves as cofactor. It depends on Mg(2+) as a cofactor.

It catalyses the reaction pyridoxal + ATP = pyridoxal 5'-phosphate + ADP + H(+). In terms of biological role, required for synthesis of pyridoxal-5-phosphate from vitamin B6. This chain is Putative pyridoxal kinase, found in Caenorhabditis elegans.